A 259-amino-acid chain; its full sequence is UPF0246 protein VF_2109 (259 aa).

Belongs to the UPF0246 family.

The sequence is that of UPF0246 protein VF_2109 from Aliivibrio fischeri (strain ATCC 700601 / ES114) (Vibrio fischeri).